The primary structure comprises 446 residues: Tubulin beta-2 chain (446 aa).

Residues Q11, E69, S138, G142, T143, G144, N204, and N226 each contribute to the GTP site. Residue E69 participates in Mg(2+) binding.

The protein belongs to the tubulin family. As to quaternary structure, dimer of alpha and beta chains. A typical microtubule is a hollow water-filled tube with an outer diameter of 25 nm and an inner diameter of 15 nM. Alpha-beta heterodimers associate head-to-tail to form protofilaments running lengthwise along the microtubule wall with the beta-tubulin subunit facing the microtubule plus end conferring a structural polarity. Microtubules usually have 13 protofilaments but different protofilament numbers can be found in some organisms and specialized cells. Requires Mg(2+) as cofactor.

Its subcellular location is the cytoplasm. The protein resides in the cytoskeleton. Functionally, tubulin is the major constituent of microtubules, a cylinder consisting of laterally associated linear protofilaments composed of alpha- and beta-tubulin heterodimers. Microtubules grow by the addition of GTP-tubulin dimers to the microtubule end, where a stabilizing cap forms. Below the cap, tubulin dimers are in GDP-bound state, owing to GTPase activity of alpha-tubulin. In Hypocrea rufa (Trichoderma viride), this protein is Tubulin beta-2 chain (tub2).